The sequence spans 196 residues: DnaA initiator-associating protein DiaA (196 aa).

The SIS domain maps to 34–196; sequence LVQSLLNGNK…DNTLFPHQDD (163 aa).

Belongs to the SIS family. DiaA subfamily. Homotetramer; dimer of dimers.

Its function is as follows. Required for the timely initiation of chromosomal replication via direct interactions with the DnaA initiator protein. In Klebsiella pneumoniae (strain 342), this protein is DnaA initiator-associating protein DiaA.